The following is an 87-amino-acid chain: Scorpine-like peptide Tco 41.46-2 (87 aa).

Residues 1–19 form the signal peptide; it reads MERKLALLLFLGMVTLASC. The BetaSPN-type CS-alpha/beta domain occupies 53–87; the sequence is QFGCPAYEGYCNNHCQDIERKDGECHGFKCKCAKD. Disulfide bonds link Cys56–Cys77, Cys63–Cys82, and Cys67–Cys84.

It belongs to the long chain scorpion toxin family. Class 1 subfamily. As to expression, expressed by the venom gland.

Its subcellular location is the secreted. Its function is as follows. May have antibacterial activity. In terms of biological role, inhibits voltage-gated potassium channel. Does not induce hemolytic activity, lactate dehydrogenase (LDH) release from mast cells, mast cell degranulation, and antimicrobial effects. In vivo, injection into mice causes moderate edema formation, but induces very weak or no change in nociceptive sensibility. It also reduces mice locomotion, suggesting an increase in anxiety, but causes no alteration in rearing (standing on hind limbs). This is Scorpine-like peptide Tco 41.46-2 from Tityus costatus (Brazilian scorpion).